The chain runs to 302 residues: Heme A synthase (302 aa).

The Cytoplasmic segment spans residues 1 to 8; that stretch reads MFRKQNLK. Residues 9–29 form a helical membrane-spanning segment; sequence WLGVLATIIMTFVQLGGALVT. Residues 30-67 are Extracellular-facing; sequence KTGSEDGCGSSWPLCNGALLPENLPIQTIIELSHRAVS. Residues C37 and C44 are joined by a disulfide bond. E60 is a catalytic residue. Position 63 (H63) interacts with heme o. Residues 68 to 88 traverse the membrane as a helical segment; that stretch reads AISLIVVLWLVITAWKNIGYI. Topologically, residues 89-93 are cytoplasmic; the sequence is KEIKP. Residues 94-114 traverse the membrane as a helical segment; the sequence is LSIISVGFLLVQALVGAAAVI. Residues 115–125 are Extracellular-facing; sequence WQQNPYVLALH. H125 provides a ligand contact to heme o. The chain crosses the membrane as a helical span at residues 126-146; sequence FGISLISFSSVFLMTLIIFSI. The Cytoplasmic portion of the chain corresponds to 147 to 161; that stretch reads DKKYEADILFIHKPL. A helical transmembrane segment spans residues 162 to 182; sequence RILTWLMAIIVYLTIYTGALV. Residues 183 to 215 lie on the Extracellular side of the membrane; that stretch reads RHTKSSLAYGAWPIPFDDIVPHNAHDWVQFSHR. H214 is a binding site for heme b. Residues 216–236 form a helical membrane-spanning segment; it reads GMAFITFIWIMITFIHAIKNY. Over 237 to 244 the chain is Cytoplasmic; the sequence is SDNRTVRY. A helical transmembrane segment spans residues 245–265; that stretch reads GYTASFILVILQVITGALSVI. At 266–270 the chain is on the extracellular side; that stretch reads TNVNL. A helical membrane pass occupies residues 271 to 291; that stretch reads IIALFHALFITYLFGMIAYFI. H276 serves as a coordination point for heme b. The Cytoplasmic segment spans residues 292 to 302; it reads LLMLRTTRSLK.

Belongs to the COX15/CtaA family. Type 1 subfamily. As to quaternary structure, interacts with CtaB. Heme b serves as cofactor.

It localises to the cell membrane. It carries out the reaction Fe(II)-heme o + 2 A + H2O = Fe(II)-heme a + 2 AH2. Its pathway is porphyrin-containing compound metabolism; heme A biosynthesis; heme A from heme O: step 1/1. Its function is as follows. Catalyzes the conversion of heme O to heme A by two successive hydroxylations of the methyl group at C8. The first hydroxylation forms heme I, the second hydroxylation results in an unstable dihydroxymethyl group, which spontaneously dehydrates, resulting in the formyl group of heme A. The sequence is that of Heme A synthase from Staphylococcus epidermidis (strain ATCC 12228 / FDA PCI 1200).